A 1371-amino-acid polypeptide reads, in one-letter code: DNA-directed RNA polymerase subunit beta (1371 aa).

This sequence belongs to the RNA polymerase beta chain family. As to quaternary structure, the RNAP catalytic core consists of 2 alpha, 1 beta, 1 beta' and 1 omega subunit. When a sigma factor is associated with the core the holoenzyme is formed, which can initiate transcription.

It catalyses the reaction RNA(n) + a ribonucleoside 5'-triphosphate = RNA(n+1) + diphosphate. In terms of biological role, DNA-dependent RNA polymerase catalyzes the transcription of DNA into RNA using the four ribonucleoside triphosphates as substrates. The protein is DNA-directed RNA polymerase subunit beta of Geobacter sp. (strain M21).